The following is a 336-amino-acid chain: Holliday junction branch migration complex subunit RuvB (336 aa).

A large ATPase domain (RuvB-L) region spans residues 4 to 184; it reads ADRLISATGV…FGIVQRLEFY (181 aa). ATP is bound by residues I23, R24, G65, K68, T69, T70, 131–133, R174, Y184, and R221; that span reads EDY. T69 provides a ligand contact to Mg(2+). A small ATPAse domain (RuvB-S) region spans residues 185-255; that stretch reads NVKDLTDIVS…IAARAMDMLD (71 aa). Positions 258–336 are head domain (RuvB-H); that stretch reads NEGFDFMDRK…HFGLQRPDER (79 aa). Residues R313 and R318 each coordinate DNA.

Belongs to the RuvB family. As to quaternary structure, homohexamer. Forms an RuvA(8)-RuvB(12)-Holliday junction (HJ) complex. HJ DNA is sandwiched between 2 RuvA tetramers; dsDNA enters through RuvA and exits via RuvB. An RuvB hexamer assembles on each DNA strand where it exits the tetramer. Each RuvB hexamer is contacted by two RuvA subunits (via domain III) on 2 adjacent RuvB subunits; this complex drives branch migration. In the full resolvosome a probable DNA-RuvA(4)-RuvB(12)-RuvC(2) complex forms which resolves the HJ.

The protein resides in the cytoplasm. It catalyses the reaction ATP + H2O = ADP + phosphate + H(+). In terms of biological role, the RuvA-RuvB-RuvC complex processes Holliday junction (HJ) DNA during genetic recombination and DNA repair, while the RuvA-RuvB complex plays an important role in the rescue of blocked DNA replication forks via replication fork reversal (RFR). RuvA specifically binds to HJ cruciform DNA, conferring on it an open structure. The RuvB hexamer acts as an ATP-dependent pump, pulling dsDNA into and through the RuvAB complex. RuvB forms 2 homohexamers on either side of HJ DNA bound by 1 or 2 RuvA tetramers; 4 subunits per hexamer contact DNA at a time. Coordinated motions by a converter formed by DNA-disengaged RuvB subunits stimulates ATP hydrolysis and nucleotide exchange. Immobilization of the converter enables RuvB to convert the ATP-contained energy into a lever motion, pulling 2 nucleotides of DNA out of the RuvA tetramer per ATP hydrolyzed, thus driving DNA branch migration. The RuvB motors rotate together with the DNA substrate, which together with the progressing nucleotide cycle form the mechanistic basis for DNA recombination by continuous HJ branch migration. Branch migration allows RuvC to scan DNA until it finds its consensus sequence, where it cleaves and resolves cruciform DNA. The protein is Holliday junction branch migration complex subunit RuvB of Aeromonas salmonicida (strain A449).